The chain runs to 3068 residues: MATSVIQFGSFVCNLPKSQPLCTTVHCPKQSMSTNIVRPSDPFAELEKHLEPYLQKRMDATIRQTKGGTLVYKHMSEAKRARKLRKKQREEEEVRLFMNAAPYIVSNITIGGGEVPSKMEEVSIKRPLNKTPSRKIKKSLTPVTFRDGHMNKFLRELRDCATRNSMTVHLIGKRKTELAFKRRASLNAVYATLHHMRGVDRKRDIVLEEWMNDYVLNLSKVSTWGSLFHAESLKRGDSGLILNARALRGKFGRCSRGFFIVRGKSDGVVLDARSKLSMATVTHMEQYSTPEAFWSGLEKKWSVVRKPTAHTCKPTYSVSNCGEVAAIIAQALFPCHKLTCGECSKEICDLTSNECVQELYKNTSLALERMNNLHPEFQHIVKVLSVVRQLTEASNHGTETFDEIFKMIGSKTQSPFTHLNKLNEFMLKGNENTSGEWLTARQHLRELVRFQKNRTDNIKKGDLASFRNKLSARAQYNLYLSCDNQLDKNASFLWGQREYHARRFFLNFFQQIDPSKGYLAYEDRTIPNGSRKLAIGNLIVPLDLAEFRKRMNGIDTQQPPIGKYCTSQLDGNFVYPCCCTTLDDGQPIRSAVYAPTKKHLVVGNTGDTKYINLPKGDTEMLYIALDGYCYINIYLAMLVNISEEEAKDFTKKVRDIFMPKLGKWPTLMDLATTCAQLRIFHPDVHDAELPRILVDHNTQTCHVVDSYGSISTGYHILKAATVSQLVLFADDNLESEIKHYRVGGIVENHKVQIDNQPSRCGVSEFHAIRMLIKGIYRPSVMYELLSEEPYLLVFSILSPSILIAMYNDRAFELAVQIWLEKEQSIPLIATILTNLAAKVSVATTLVQQLQLIELSADQLLNVTCDGFRVSFAYQSALTLLTRMRDQAKANSELISGGFNEYDQDLAWTLEKNYQGLLHDQWKELSSLEKFRYYWSSRKRKTRLRSNIKSRSSPVASAISSLSLKPFMGKVFSHMKAGAVCTKQGTKNFIDARCLGISTYFVGSLMRKFPSAKVLLSSLFVLGALLNITHAANRIIIDNRISREHAAALELYRKEDTCHELYTALERKLGEKPTWDEYCSYVAKINPAMLEFIKDSYDEKQVVHQRSTEDLKKVEHIIAFVTLAIMLFDSERSDCVFKTLNKFKGVVCSLGSGVRHQSLDDFVSTMDEKNFVVDFELNDSVQRKNLTTEITFESWWDEQVARGFTIPHYRTEGRFMEFTRATAAKVASDISISSERDFLIRGAVGSGKSTGLPHHLSTYGRVLLIEPTRPLAENVFKQLSGGPFFLKPTMRMRGNSVFGSSPISVMTSGFALHFFANNITQLQEIQFIIIDECHVMDASSMAFRSLIHTYHTNCKVLKVSATPPGREVEFTTQFPVKLVVEDSLSFKTFVESQGTGSNCDMIQYGNNLLVYVASYNEVDQLSKLLVAREFNVTKVDGRTMKHGELEIVTRGTKSKPHFVVATNIIENGVTLDIDVVIDFGMKVSPFLDVDNRSVAYNKVSISYGERIQRLGRVGRIQKGTALRIGHTEKGLIEIPQMISTEAALYCFAYNLPVMSSGVSTSMIKNCTIPQVRTMHTFELSPFFMYNFVSHDGTMHPVVHETLKRYKLRDSVIPLSESSIPYRASSDWITAGDYRRIGVKLDIPDETRIAFHIKTFHRKFTNNLWESVLKYKASAAFPTLRSSSITKIAYTLSTDLYAIPRTLAVVESLLEDERTKQYQFKSLIDNGCSSMFSVVGISNALRAKYSKDHTVENINKLETVKAQLKEFHNLNGSGDELNLIKRFESLQFVHHQSKSSLAKALGLRGVWNKSLIVRDAIIAAGVACGGAWLLYTWFTAKMSEVSHQGRSKTKRIQALKFRKARDKRAGFEIDNNEDTIEEYFGSAYTKKGKGKGTTVGMGRTNRRFINMYGFEPGQFSYIKFVDPLTGAQMEENVYADIVDVQEKFGDIRRQMILDDELDRRQTDVHNTIHAYLIKDWSNKALKVDLTPHNPLRVSDKASAIMKFPEREGELRQTGQAVEVDVCDIPKEVVKHEAKTLMRGLRDYNPIAQTVCKLTVKSELGETSTYGLGFGGLIIANHHLFKSFNGSLEVKSHHGVFRVPNLMAISVLPLKGRDMIIIKMPKDFPVFPQRLKFREPASTDRVCLIGSNFQERYISTTVSEISATHPVPRSTFWKHWISTDDGHCGLPIVSTTDGFILGLHSLANNRNSENYYTAFDSDFEMKILRSGENTEWVKNWKYNPDTVLWGPLQLTKGTPSGMFKTTKMIEDLLAFKSESVREQAHTSSWMLEVLKENLKAIAYMKSQLVTKHVVKGECMMFKQYLQENPRANEFFQPKMWAYGKSMLNKEAYIKDIMKYSKVIDVGVVDCDRHLRKLSLELLYTQIHGFRKCSYITDEEEIFKALNITTAVGAMYGGKKKEYFEKFTTEDKAEILRQSCLRLYTGKLGVWEWALKAELRSKEKIEANKTRTFTAAPIDTLLGGKVCVDDLNNQFYSKNIECCWTVGMTKFYGGWDKLLTALPAGWIYCDADGSQFDSSLTPYLINAVLTIRYAFMEDWDIGYKMLQNLYTEIIYTPISTPDGTIVKKFRGNNSGQPSTVVDNSLMVVLAMHYAFVREGIAFEEIDSICKFFVNGDDLLIAVNPERESLLDTLSNHFSDLGLNYDFSSRTRNKSELWFMSHCGISVEGTYIPKLEEERIVSILQWDRAELPEYRLEAICAAMIESWGYPQLTHEIRRFYSWLIEKNPYADLASEGKAPYISELALKKLYLNQDVQMMSFRSYLKYFADADEEFECGTYEVRHQSSSRSDTLDAGEEKKKNKEVATVSDGMGKKEVESTRDSDVNAGTVGTFTIPRIKSITEKMRMPKQKRKGVLNLAHLLEYKPSQVDISNTRSTQAQFDNWYCEVMKAYDLQEEAMGTVMNGLMVWCIENGTSPNISGTWTMMDGDEQVEFPLKPVIENAKPTFRQIMAHFSDVAEAYIEMRNKQEPYMPRYGLVRNLRDMGLARYAFDFYEVTSRTSTRAREAHIQMKAAALKSAQTRLFGLDGGIGTQGENTERHTTEDVSPDMHTLLGVREM.

A Peptidase S30 domain is found at 144–287; sequence TFRDGHMNKF…MATVTHMEQY (144 aa). Catalysis depends on for P1 proteinase activity residues H195, D204, and S238. Residues 337–340 carry the Involved in interaction with stylet and aphid transmission motif; it reads KLTC. The Involved in virions binding and aphid transmission signature appears at 595–597; it reads PTK. A Peptidase C6 domain is found at 621 to 743; sequence LYIALDGYCY…ESEIKHYRVG (123 aa). Catalysis depends on for helper component proteinase activity residues C629 and H702. The 153-residue stretch at 1228 to 1380 folds into the Helicase ATP-binding domain; the sequence is DISISSERDF…TQFPVKLVVE (153 aa). 1241-1248 provides a ligand contact to ATP; it reads GAVGSGKS. The DECH box motif lies at 1330–1333; the sequence is DECH. One can recognise a Helicase C-terminal domain in the interval 1399-1558; it reads DMIQYGNNLL…NLPVMSSGVS (160 aa). A Nuclear localization signal motif is present at residues 1884 to 1891; it reads KKGKGKGT. An O-(5'-phospho-RNA)-tyrosine modification is found at Y1906. A Peptidase C4 domain is found at 2031 to 2249; sequence AKTLMRGLRD…VLWGPLQLTK (219 aa). Residues H2076, D2111, and C2181 each act as for nuclear inclusion protein A activity in the active site. The 125-residue stretch at 2518-2642 folds into the RdRp catalytic domain; that stretch reads WIYCDADGSQ…AVNPERESLL (125 aa). Residues 2796–2833 form a disordered region; that stretch reads SSSRSDTLDAGEEKKKNKEVATVSDGMGKKEVESTRDS. Positions 2822–2833 are enriched in basic and acidic residues; that stretch reads MGKKEVESTRDS. T3051 carries the post-translational modification Phosphothreonine.

This sequence belongs to the potyviridae genome polyprotein family. In terms of assembly, interacts with host eIF4E protein (via cap-binding region); this interaction mediates the translation of the VPg-viral RNA conjugates. Part of a complex that comprises VPg, RNA, host EIF4E and EIF4G; this interaction mediates the translation of the VPg-viral RNA conjugates. In terms of processing, VPg is uridylylated by the polymerase and is covalently attached to the 5'-end of the genomic RNA. This uridylylated form acts as a nucleotide-peptide primer for the polymerase. Post-translationally, potyviral RNA is expressed as two polyproteins which undergo post-translational proteolytic processing. Genome polyprotein is processed by NIa-pro, P1 and HC-pro proteinases resulting in the production of at least ten individual proteins. P3N-PIPO polyprotein is cleaved by P1 and HC-pro proteinases resulting in the production of three individual proteins. The P1 proteinase and the HC-pro cleave only their respective C-termini autocatalytically. 6K1 is essential for proper proteolytic separation of P3 from CI.

It is found in the host cytoplasmic vesicle. It localises to the host nucleus. Its subcellular location is the virion. The catalysed reaction is RNA(n) + a ribonucleoside 5'-triphosphate = RNA(n+1) + diphosphate. It carries out the reaction Hydrolyzes glutaminyl bonds, and activity is further restricted by preferences for the amino acids in P6 - P1' that vary with the species of potyvirus, e.g. Glu-Xaa-Xaa-Tyr-Xaa-Gln-|-(Ser or Gly) for the enzyme from tobacco etch virus. The natural substrate is the viral polyprotein, but other proteins and oligopeptides containing the appropriate consensus sequence are also cleaved.. The enzyme catalyses Hydrolyzes a Gly-|-Gly bond at its own C-terminus, commonly in the sequence -Tyr-Xaa-Val-Gly-|-Gly, in the processing of the potyviral polyprotein.. Required for aphid transmission and also has proteolytic activity. Only cleaves a Gly-Gly dipeptide at its own C-terminus. Interacts with virions and aphid stylets. Acts as a suppressor of RNA-mediated gene silencing, also known as post-transcriptional gene silencing (PTGS), a mechanism of plant viral defense that limits the accumulation of viral RNAs. May have RNA-binding activity. In terms of biological role, has helicase activity. It may be involved in replication. Its function is as follows. Indispensable for virus replication. Reduces the abundance of host transcripts related to jasmonic acid biosynthesis therefore altering the host defenses. In order to increase its own stability, decreases host protein degradation pathways. Functionally, indispensable for virus replication. Mediates the cap-independent, EIF4E-dependent translation of viral genomic RNAs. Binds to the cap-binding site of host EIF4E and thus interferes with the host EIF4E-dependent mRNA export and translation. VPg-RNA directly binds EIF4E and is a template for transcription. Also forms trimeric complexes with EIF4E-EIF4G, which are templates for translation. In terms of biological role, has RNA-binding and proteolytic activities. Its function is as follows. An RNA-dependent RNA polymerase that plays an essential role in the virus replication. Functionally, involved in aphid transmission, cell-to-cell and systemis movement, encapsidation of the viral RNA and in the regulation of viral RNA amplification. The protein is Genome polyprotein of Pepper mottle virus (isolate California) (PeMV).